The sequence spans 177 residues: MSRVAKAPVSIPAGVEVKLDGQLLTVKGKNGELSRTIHNAVEVKQDNNELTFSPREGIVGADAQAGTARALVNAMVIGVTEGFTKKLQLVGVGYRAQIKGNAVALSLGFSHPVEHALPAGITAECPSQTEIVLKGADKQLIGQVAADIRAYRRPEPYKGKGVRYADEVVRIKEAKKK.

Belongs to the universal ribosomal protein uL6 family. Part of the 50S ribosomal subunit.

In terms of biological role, this protein binds to the 23S rRNA, and is important in its secondary structure. It is located near the subunit interface in the base of the L7/L12 stalk, and near the tRNA binding site of the peptidyltransferase center. This is Large ribosomal subunit protein uL6 from Pasteurella multocida (strain Pm70).